Consider the following 733-residue polypeptide: Fibronectin type III domain-containing protein 7 (733 aa).

The signal sequence occupies residues 1 to 25 (MAGGRETCLPLIGFILICLKMVASA). Fibronectin type-III domains are found at residues 28 to 115 (APEI…TVLA), 116 to 202 (APIL…TSPR), 203 to 288 (APAN…TVAC), 289 to 373 (APGR…TAPC), 374 to 459 (CPSD…TAPC), 460 to 544 (SPEI…TVPC), 545 to 632 (CPTG…CCPL), and 631 to 715 (PLGV…YSVT). Asn-230 is a glycosylation site (N-linked (GlcNAc...) asparagine). An N-linked (GlcNAc...) asparagine glycan is attached at Asn-433.

It localises to the secreted. The chain is Fibronectin type III domain-containing protein 7 (FNDC7) from Homo sapiens (Human).